A 468-amino-acid chain; its full sequence is Tyrosine-protein phosphatase YopH (468 aa).

The tract at residues 127–194 is disordered; that stretch reads ARGHVSSHSH…TVSPYGPEAR (68 aa). A compositionally biased stretch (low complexity) spans 130-140; that stretch reads HVSSHSHSVLH. Residues 152–461 enclose the Tyrosine-protein phosphatase domain; sequence SHLDPRTPPL…DVLIKLAEGQ (310 aa). Cysteine 403 serves as the catalytic Phosphocysteine intermediate.

The protein belongs to the protein-tyrosine phosphatase family. Non-receptor class subfamily. In terms of assembly, monomer.

The protein localises to the secreted. It catalyses the reaction O-phospho-L-tyrosyl-[protein] + H2O = L-tyrosyl-[protein] + phosphate. In terms of biological role, essential virulence determinant. This protein is a protein tyrosine phosphatase. The essential function of YopH in Yersinia pathogenesis is host-protein dephosphorylation. It contributes to the ability of the bacteria to resist phagocytosis by peritoneal macrophages. The protein is Tyrosine-protein phosphatase YopH (yopH) of Yersinia enterocolitica.